The following is a 257-amino-acid chain: 5-oxoprolinase subunit A (257 aa).

The protein belongs to the LamB/PxpA family. Forms a complex composed of PxpA, PxpB and PxpC.

The enzyme catalyses 5-oxo-L-proline + ATP + 2 H2O = L-glutamate + ADP + phosphate + H(+). In terms of biological role, catalyzes the cleavage of 5-oxoproline to form L-glutamate coupled to the hydrolysis of ATP to ADP and inorganic phosphate. The sequence is that of 5-oxoprolinase subunit A from Bacillus subtilis (strain 168).